The primary structure comprises 211 residues: Arginine exporter protein ArgO (211 aa).

The next 6 membrane-spanning stretches (helical) occupy residues 1–21, 37–57, 68–88, 111–131, 147–167, and 179–199; these read MFTY…PLGP, LMIA…GIFG, LLAL…FGAL, IIIT…DTFV, WFAL…ALLA, and AQRI…FQLA.

Belongs to the LysE/ArgO transporter (TC 2.A.75) family.

The protein resides in the cell inner membrane. The enzyme catalyses L-arginine(in) = L-arginine(out). Its function is as follows. Involved in the export of arginine. Important to control the intracellular level of arginine and the correct balance between arginine and lysine. The protein is Arginine exporter protein ArgO of Klebsiella pneumoniae subsp. pneumoniae (strain ATCC 700721 / MGH 78578).